A 105-amino-acid polypeptide reads, in one-letter code: uncharacterized protein (105 aa).

2 consecutive transmembrane segments (helical) span residues 10 to 30 and 48 to 68; these read YVVF…FKIG and YPLA…YPPS.

It is found in the membrane. This is an uncharacterized protein from Acanthamoeba polyphaga mimivirus (APMV).